A 329-amino-acid chain; its full sequence is Malate dehydrogenase (329 aa).

12–18 is a binding site for NAD(+); the sequence is GAAGQIG. Residues Arg-95 and Arg-101 each contribute to the substrate site. NAD(+) is bound by residues Asn-108, Gln-115, and 132–134; that span reads VGN. Positions 134 and 165 each coordinate substrate. His-190 functions as the Proton acceptor in the catalytic mechanism.

Belongs to the LDH/MDH superfamily. MDH type 2 family.

It catalyses the reaction (S)-malate + NAD(+) = oxaloacetate + NADH + H(+). Its function is as follows. Catalyzes the reversible oxidation of malate to oxaloacetate. This is Malate dehydrogenase from Herminiimonas arsenicoxydans.